Consider the following 279-residue polypeptide: 3-methyl-2-oxobutanoate hydroxymethyltransferase (279 aa).

Residues aspartate 44 and aspartate 83 each coordinate Mg(2+). Residues 44–45, aspartate 83, and lysine 113 contribute to the 3-methyl-2-oxobutanoate site; that span reads DS. Glutamate 115 is a binding site for Mg(2+). The active-site Proton acceptor is the glutamate 182.

Belongs to the PanB family. In terms of assembly, homodecamer; pentamer of dimers. It depends on Mg(2+) as a cofactor.

It is found in the cytoplasm. The enzyme catalyses 3-methyl-2-oxobutanoate + (6R)-5,10-methylene-5,6,7,8-tetrahydrofolate + H2O = 2-dehydropantoate + (6S)-5,6,7,8-tetrahydrofolate. It functions in the pathway cofactor biosynthesis; (R)-pantothenate biosynthesis; (R)-pantoate from 3-methyl-2-oxobutanoate: step 1/2. Catalyzes the reversible reaction in which hydroxymethyl group from 5,10-methylenetetrahydrofolate is transferred onto alpha-ketoisovalerate to form ketopantoate. This chain is 3-methyl-2-oxobutanoate hydroxymethyltransferase, found in Dehalococcoides mccartyi (strain CBDB1).